We begin with the raw amino-acid sequence, 374 residues long: Phosphoserine aminotransferase (374 aa).

An L-glutamate-binding site is contributed by arginine 46. Pyridoxal 5'-phosphate is bound by residues 80 to 81 (AT), phenylalanine 104, threonine 150, aspartate 174, and glutamine 197. Lysine 198 carries the post-translational modification N6-(pyridoxal phosphate)lysine. 249–250 (NT) provides a ligand contact to pyridoxal 5'-phosphate.

It belongs to the class-V pyridoxal-phosphate-dependent aminotransferase family. SerC subfamily. As to quaternary structure, homodimer. It depends on pyridoxal 5'-phosphate as a cofactor.

The protein resides in the cytoplasm. The catalysed reaction is O-phospho-L-serine + 2-oxoglutarate = 3-phosphooxypyruvate + L-glutamate. The enzyme catalyses 4-(phosphooxy)-L-threonine + 2-oxoglutarate = (R)-3-hydroxy-2-oxo-4-phosphooxybutanoate + L-glutamate. Its pathway is amino-acid biosynthesis; L-serine biosynthesis; L-serine from 3-phospho-D-glycerate: step 2/3. It participates in cofactor biosynthesis; pyridoxine 5'-phosphate biosynthesis; pyridoxine 5'-phosphate from D-erythrose 4-phosphate: step 3/5. Its function is as follows. Catalyzes the reversible conversion of 3-phosphohydroxypyruvate to phosphoserine and of 3-hydroxy-2-oxo-4-phosphonooxybutanoate to phosphohydroxythreonine. The chain is Phosphoserine aminotransferase from Nocardioides sp. (strain ATCC BAA-499 / JS614).